Reading from the N-terminus, the 297-residue chain is Acetylglutamate kinase (297 aa).

Substrate-binding positions include 73–74 (GG), arginine 95, and asparagine 188.

This sequence belongs to the acetylglutamate kinase family. ArgB subfamily.

It localises to the cytoplasm. It catalyses the reaction N-acetyl-L-glutamate + ATP = N-acetyl-L-glutamyl 5-phosphate + ADP. It functions in the pathway amino-acid biosynthesis; L-arginine biosynthesis; N(2)-acetyl-L-ornithine from L-glutamate: step 2/4. In terms of biological role, catalyzes the ATP-dependent phosphorylation of N-acetyl-L-glutamate. The polypeptide is Acetylglutamate kinase (Trichormus variabilis (strain ATCC 29413 / PCC 7937) (Anabaena variabilis)).